A 486-amino-acid chain; its full sequence is Ribosomal RNA small subunit methyltransferase F (486 aa).

Residues 124–130 (ASAPGSK), glutamate 148, aspartate 175, and aspartate 193 contribute to the S-adenosyl-L-methionine site. Residue cysteine 246 is the Nucleophile of the active site.

Belongs to the class I-like SAM-binding methyltransferase superfamily. RsmB/NOP family.

It localises to the cytoplasm. It carries out the reaction cytidine(1407) in 16S rRNA + S-adenosyl-L-methionine = 5-methylcytidine(1407) in 16S rRNA + S-adenosyl-L-homocysteine + H(+). Functionally, specifically methylates the cytosine at position 1407 (m5C1407) of 16S rRNA. This Shewanella baltica (strain OS195) protein is Ribosomal RNA small subunit methyltransferase F.